A 126-amino-acid chain; its full sequence is Phosphoribosyl-AMP cyclohydrolase (126 aa).

D74 is a Mg(2+) binding site. C75 contributes to the Zn(2+) binding site. Mg(2+) contacts are provided by D76 and D78. The Zn(2+) site is built by C92 and C99.

It belongs to the PRA-CH family. Homodimer. Mg(2+) serves as cofactor. The cofactor is Zn(2+).

It localises to the cytoplasm. The catalysed reaction is 1-(5-phospho-beta-D-ribosyl)-5'-AMP + H2O = 1-(5-phospho-beta-D-ribosyl)-5-[(5-phospho-beta-D-ribosylamino)methylideneamino]imidazole-4-carboxamide. Its pathway is amino-acid biosynthesis; L-histidine biosynthesis; L-histidine from 5-phospho-alpha-D-ribose 1-diphosphate: step 3/9. Its function is as follows. Catalyzes the hydrolysis of the adenine ring of phosphoribosyl-AMP. The protein is Phosphoribosyl-AMP cyclohydrolase of Geotalea daltonii (strain DSM 22248 / JCM 15807 / FRC-32) (Geobacter daltonii).